Reading from the N-terminus, the 431-residue chain is Glutamate-1-semialdehyde 2,1-aminomutase 2 (431 aa).

Lys268 carries the post-translational modification N6-(pyridoxal phosphate)lysine.

It belongs to the class-III pyridoxal-phosphate-dependent aminotransferase family. HemL subfamily. In terms of assembly, homodimer. Requires pyridoxal 5'-phosphate as cofactor.

The protein localises to the cytoplasm. The enzyme catalyses (S)-4-amino-5-oxopentanoate = 5-aminolevulinate. The protein operates within porphyrin-containing compound metabolism; protoporphyrin-IX biosynthesis; 5-aminolevulinate from L-glutamyl-tRNA(Glu): step 2/2. The sequence is that of Glutamate-1-semialdehyde 2,1-aminomutase 2 from Bacillus licheniformis (strain ATCC 14580 / DSM 13 / JCM 2505 / CCUG 7422 / NBRC 12200 / NCIMB 9375 / NCTC 10341 / NRRL NRS-1264 / Gibson 46).